Here is a 360-residue protein sequence, read N- to C-terminus: uncharacterized protein (360 aa).

Residues 22–32 (EEDVEPNEEAE) are compositionally biased toward acidic residues. Positions 22-55 (EEDVEPNEEAEGPGGVHKKRRGARKKNRRQRMEG) are disordered. Residues 37–50 (VHKKRRGARKKNRR) are compositionally biased toward basic residues.

This is an uncharacterized protein from Caenorhabditis elegans.